A 137-amino-acid polypeptide reads, in one-letter code: Peptide methionine sulfoxide reductase MsrB (137 aa).

The MsrB domain occupies 7 to 129 (AEELKKNLSE…NSASLRFTDG (123 aa)). Residues cysteine 46, cysteine 49, cysteine 95, and cysteine 98 each contribute to the Zn(2+) site. The Nucleophile role is filled by cysteine 118.

The protein belongs to the MsrB Met sulfoxide reductase family. It depends on Zn(2+) as a cofactor.

It catalyses the reaction L-methionyl-[protein] + [thioredoxin]-disulfide + H2O = L-methionyl-(R)-S-oxide-[protein] + [thioredoxin]-dithiol. This Escherichia coli (strain K12 / MC4100 / BW2952) protein is Peptide methionine sulfoxide reductase MsrB.